Here is a 636-residue protein sequence, read N- to C-terminus: 1-deoxy-D-xylulose-5-phosphate synthase (636 aa).

Thiamine diphosphate-binding positions include histidine 74 and 115–117 (AHS). Aspartate 146 contacts Mg(2+). Residues 147 to 148 (GS), asparagine 176, tyrosine 287, and glutamate 369 contribute to the thiamine diphosphate site. Asparagine 176 is a Mg(2+) binding site.

Belongs to the transketolase family. DXPS subfamily. As to quaternary structure, homodimer. Mg(2+) is required as a cofactor. Requires thiamine diphosphate as cofactor.

It carries out the reaction D-glyceraldehyde 3-phosphate + pyruvate + H(+) = 1-deoxy-D-xylulose 5-phosphate + CO2. The protein operates within metabolic intermediate biosynthesis; 1-deoxy-D-xylulose 5-phosphate biosynthesis; 1-deoxy-D-xylulose 5-phosphate from D-glyceraldehyde 3-phosphate and pyruvate: step 1/1. Catalyzes the acyloin condensation reaction between C atoms 2 and 3 of pyruvate and glyceraldehyde 3-phosphate to yield 1-deoxy-D-xylulose-5-phosphate (DXP). The polypeptide is 1-deoxy-D-xylulose-5-phosphate synthase (Polaromonas naphthalenivorans (strain CJ2)).